The chain runs to 46 residues: Photosystem II reaction center protein K (46 aa).

A propeptide spanning residues 1–9 (MLTLLNTFA) is cleaved from the precursor. The helical transmembrane segment at 25–45 (LPLIPLFFFLLVFVWQAAVGF) threads the bilayer.

It belongs to the PsbK family. In terms of assembly, PSII is composed of 1 copy each of membrane proteins PsbA, PsbB, PsbC, PsbD, PsbE, PsbF, PsbH, PsbI, PsbJ, PsbK, PsbL, PsbM, PsbT, PsbX, PsbY, Psb30/Ycf12, peripheral proteins PsbO, CyanoQ (PsbQ), PsbU, PsbV and a large number of cofactors. It forms dimeric complexes.

It localises to the cellular thylakoid membrane. In terms of biological role, one of the components of the core complex of photosystem II (PSII). PSII is a light-driven water:plastoquinone oxidoreductase that uses light energy to abstract electrons from H(2)O, generating O(2) and a proton gradient subsequently used for ATP formation. It consists of a core antenna complex that captures photons, and an electron transfer chain that converts photonic excitation into a charge separation. The protein is Photosystem II reaction center protein K of Prochlorococcus marinus (strain MIT 9515).